The primary structure comprises 485 residues: MASTGPTNIQEKTTCPVCQELLTKALSLGCGHLVCQACLISNKNAVINPRGKSSCPVCGTRFSLENLQANKHLANVVERLGEVKLKPDIGTKRDLCVHHGEKLLLFCKEDKKVICWVCERSQEHRGHHTFLWEEAVRECQENLQKALTRLRKEQEKVETLEADIKEDRLSWKRQVQTERQRIQTGFNQLRRILDKEEQRELKRLREEEQMILDSLAGAEAELAQQSQLVEELISDLELRREWSDTELLQDMSGILKWSQIWTLKKPKAVSKKLSMVFQAPDLSGMLQKFRELSAVRAYWDNFTFNPENLNLNLILSEDHRQVTSVSIWPFKCCNNGILGSKCFSSGKHYWEVDVSEKNAWTLGVYTRKRTLRFDVRQRKGQPNGYHRYKPQNGYWVIGLQHGSKYSIFEDSSNCDPTVLNPFVATPLHRVGIFLDCEEGTVSFLNVTNHGSLIYKFSQCCFSQPAYPYFNPWDCPAPMTLCPLNS.

An RING-type zinc finger spans residues 15–58 (CPVCQELLTKALSLGCGHLVCQACLISNKNAVINPRGKSSCPVC). Residues 91 to 127 (TKRDLCVHHGEKLLLFCKEDKKVICWVCERSQEHRGH) form a B box-type zinc finger. Zn(2+) is bound by residues Cys-96, His-99, Cys-118, and His-124. Positions 136-170 (VRECQENLQKALTRLRKEQEKVETLEADIKEDRLS) form a coiled coil. The 204-residue stretch at 282-485 (LSGMLQKFRE…APMTLCPLNS (204 aa)) folds into the B30.2/SPRY domain.

This sequence belongs to the TRIM/RBCC family. Homotrimer. Interacts (via B-box and SPRY domain) with TRIM5.

The protein resides in the cytoplasm. It localises to the mitochondrion. It catalyses the reaction S-ubiquitinyl-[E2 ubiquitin-conjugating enzyme]-L-cysteine + [acceptor protein]-L-lysine = [E2 ubiquitin-conjugating enzyme]-L-cysteine + N(6)-ubiquitinyl-[acceptor protein]-L-lysine.. It functions in the pathway protein modification; protein ubiquitination. In terms of biological role, functions as antiviral protein and contributes to the defense against retroviral infections. Acts as a capsid-specific restriction factor with the help of TRIM5 and prevents infection from non-host-adapted retroviruses. During influenza A virus infection, promotes programmed cell death by targeting ZBP1 for 'Lys-63'-linked polyubiquitination. In turn, promotes ZBP1 recruitment of RIPK3 to mediate virus-induced programmed necrosis. Negatively regulates the function of mitochondria by enhancing mitochondrial depolarization leading to cytochrome c release and mitochondria-dependent apoptosis. Also promotes the formation of multinucleated giant cells by means of cell fusion and phagocytosis in epithelial cells. Regulates intestinal inflammation by controlling the exocytosis of the major component of colonic mucus MUC2 from colonic goblet cells. The chain is E3 ubiquitin-protein ligase TRIM34B from Mus musculus (Mouse).